A 192-amino-acid chain; its full sequence is Virion infectivity factor (192 aa).

The segment at 14 to 17 (DRMR) is interaction with host APOBEC3F; F1-box. An interaction with host APOBEC3G; G-box region spans residues 40-44 (YRHHF). The interaction with host APOBEC3F and APOBEC3G; FG-box stretch occupies residues 54 to 72 (EVHIPLETAELVITTYWGL). The interaction with host APOBEC3F; F2-box stretch occupies residues 74 to 79 (PGEREW). The segment at 75 to 114 (GEREWHLGQGVSIEWRQGRYRTQIDPGLADQLIHIYYFDC) is RNA-binding. Thr96 is modified (phosphothreonine; by host MAP4K1). Zn(2+) is bound by residues His108, Cys114, Cys133, and His139. Positions 108–139 (HIYYFDCFSESAIRKAILGHKISPRCNYQAGH) match the HCCH motif motif. Ser144 carries the post-translational modification Phosphoserine; by host. The BC-box-like motif motif lies at 144 to 153 (SLQYLALTAL). Residues 151 to 164 (TALIAPKKTKPPLP) are multimerization. The segment at 151–180 (TALIAPKKTKPPLPSVQKLVEDRWNKPQKT) is SOCS box-like. A disordered region spans residues 164–192 (PSVQKLVEDRWNKPQKTRGHRESHTMNGH). Phosphoserine; by host MAP4K1 is present on Ser165. The interval 171–172 (ED) is membrane association. Residues 183 to 192 (HRESHTMNGH) are compositionally biased toward basic and acidic residues. Position 188 is a phosphothreonine; by host (Thr188).

Belongs to the primate lentivirus group Vif protein family. In terms of assembly, homomultimer; in vitro and presumably in vivo. Interacts with viral RNA and Pr55Gag precursor; these interactions mediate Vif incorporation into the virion. Interacts with the viral reverse transcriptase. Forms cullin-5-RING E3 ubiquitin-protein ligase complex (ECS complex) by interacting with host CUL5, RBX2, elongin BC complex (ELOB and ELOC) and CBFB/CBF-beta. Within the ECS complex, Vif interacts directly with host CUL5, ELOC and APOBEC (APOBEC3F and APOBEC3G) substrates. The ECS complex also contains some single-stranded RNA (ssRNA) that acts as a glue that bridges Vif with APOBEC (APOBEC3F and APOBEC3G) substrates. Interacts with host UBCE7IP1 isoform 3/ZIN and possibly with SAT. Interacts with host tyrosine kinases HCK and FYN; these interactions may decrease level of phosphorylated APOBEC3G incorporation into virions. Interacts with host ABCE1; this interaction may play a role in protecting viral RNA from damage during viral assembly. Interacts with host MDM2; this interaction targets Vif for degradation by the proteasome. Processed in virion by the viral protease. Post-translationally, highly phosphorylated on serine and threonine residues. In terms of processing, polyubiquitinated and degraded by the proteasome in the presence of APOBEC3G.

It is found in the host cytoplasm. The protein localises to the host cell membrane. Its subcellular location is the virion. Functionally, counteracts the innate antiviral activity of host APOBEC3F and APOBEC3G by promoting their ubiquitination and degradation. Acts as a substrate recognition component of an E3 ubiquitin-protein ligase complex: mechanistically, Vif hijacks a host cullin-5-RING E3 ubiquitin-protein ligase complex (ECS complex) and the transcription coactivator CBFB/CBF-beta to form an active E3 ubiquitin-protein ligase complex that targets APOBEC3G and APOBEC3F for polyubiquitination, leading to their degradation by the proteasome. Vif interaction with APOBEC3G also blocks its cytidine deaminase activity in a proteasome-independent manner, suggesting a dual inhibitory mechanism. May interact directly with APOBEC3G mRNA in order to inhibit its translation. Association with CBFB/CBF-beta also inhibits the transcription coactivator activity of CBFB/CBF-beta. Seems to play a role in viral morphology by affecting the stability of the viral nucleoprotein core. Finally, Vif also contributes to the G2 cell cycle arrest observed in HIV infected cells. The chain is Virion infectivity factor from Homo sapiens (Human).